The following is a 273-amino-acid chain: Salivary glue protein Sgs-3 (273 aa).

The first 23 residues, methionine 1–glycine 23, serve as a signal peptide directing secretion. A compositionally biased stretch (low complexity) spans threonine 47–proline 57. The interval threonine 47 to cysteine 225 is disordered. The span at proline 58 to threonine 67 shows a compositional bias: pro residues. The segment covering arginine 83 to cysteine 225 has biased composition (low complexity).

In Drosophila yakuba (Fruit fly), this protein is Salivary glue protein Sgs-3 (Sgs3).